We begin with the raw amino-acid sequence, 180 residues long: MGGVMSYFRGLFGAREMRILILGLDGAGKTTILYRLQVGEVVTTIPTIGFNVEQVEYKNLKFQVWDLGGQTSIRPYWRCYYANTDAIIYVVDSADRDRVGISRQELATMLQEDELQGAVLAVLANKQDIAGCLTETEVYKALGLDALRNRTIQIFKTSASKGEGLDPAMDWLANQLQQKK.

Gly-2 is lipidated: N-myristoyl glycine. GTP contacts are provided by residues 23-30, 66-70, and 125-128; these read GLDGAGKT, DLGGQ, and NKQD.

Belongs to the small GTPase superfamily. Arf family. Expressed in neuronal cells. Expression in hypodermal tissues is absent.

It is found in the golgi apparatus. The protein localises to the cytoplasm. It localises to the cytoplasmic granule. Its function is as follows. GTP-binding protein that may be involved in protein trafficking; may modulate vesicle budding and uncoating within the Golgi apparatus. Plays a role in male tail tip morphogenesis. This chain is ADP-ribosylation factor-like protein 1, found in Caenorhabditis elegans.